The sequence spans 92 residues: Small ribosomal subunit protein uS17 (92 aa).

The protein belongs to the universal ribosomal protein uS17 family. As to quaternary structure, part of the 30S ribosomal subunit.

In terms of biological role, one of the primary rRNA binding proteins, it binds specifically to the 5'-end of 16S ribosomal RNA. The protein is Small ribosomal subunit protein uS17 of Wigglesworthia glossinidia brevipalpis.